We begin with the raw amino-acid sequence, 217 residues long: tRNA (guanine-N(7)-)-methyltransferase (217 aa).

Glu-45, Glu-70, Asp-97, and Asp-119 together coordinate S-adenosyl-L-methionine. Asp-119 is an active-site residue. Lys-123 contacts substrate. Positions 125 to 130 (RHEKRR) are interaction with RNA. Substrate-binding positions include Asp-155 and 195 to 198 (TEYE).

This sequence belongs to the class I-like SAM-binding methyltransferase superfamily. TrmB family.

It catalyses the reaction guanosine(46) in tRNA + S-adenosyl-L-methionine = N(7)-methylguanosine(46) in tRNA + S-adenosyl-L-homocysteine. Its pathway is tRNA modification; N(7)-methylguanine-tRNA biosynthesis. Catalyzes the formation of N(7)-methylguanine at position 46 (m7G46) in tRNA. This Lactobacillus helveticus (strain DPC 4571) protein is tRNA (guanine-N(7)-)-methyltransferase.